Consider the following 505-residue polypeptide: MVSIRPDEISSILKQQITDYDQSVSVSNVGTVLQIGDGIARIYGLDQVMAGELLEFEDGTEGIALNLEDDNVGAVLMGEALGVQEGSNVKSTGKIASVPVGEAMKGRVVNPLGQPIDGKGEIPTSDNRLIEEMAPGIIKRRSVHEPMQTGITSIDAMIPVGRGQRELIIGDRQTGKTAIAIDTIINQKGQDVVCVYVAIGQKSASVANVVEVLREKGALDYTVVVSAGASEAAALQYLAPYTGAAIAEHFMYQGKATLVIYDDLTKQAQAYRQMSLLLRRPPGREAYPGDVFYCHSRLLERAAKLSDDMGGGSMTALPIIETQAGDVSAYIPTNVISITDGQIFLSADLFNSGLRPAINVGISVSRVGGAAQTKAIKKIAGTLKLELAQFDELAAFSQFASDLDEATQQQLERGKRLRELLKQAQFSPLNLAEQVAVVYAGVKGLIDEVPVEDVTKFAAELREYLKLNKAEFIEEILKEKKLNEGLETTLTEVIKEVKSSMLATV.

170 to 177 (GDRQTGKT) is a binding site for ATP.

Belongs to the ATPase alpha/beta chains family. In terms of assembly, F-type ATPases have 2 components, CF(1) - the catalytic core - and CF(0) - the membrane proton channel. CF(1) has five subunits: alpha(3), beta(3), gamma(1), delta(1), epsilon(1). CF(0) has four main subunits: a(1), b(1), b'(1) and c(9-12).

It localises to the cellular thylakoid membrane. It catalyses the reaction ATP + H2O + 4 H(+)(in) = ADP + phosphate + 5 H(+)(out). Functionally, produces ATP from ADP in the presence of a proton gradient across the membrane. The alpha chain is a regulatory subunit. The protein is ATP synthase subunit alpha of Prochlorococcus marinus (strain MIT 9515).